The following is a 134-amino-acid chain: Crustacean hyperglycemic hormones isoform A (134 aa).

The first 24 residues, 1–24 (MMACRTLCLVVVMVASLGTSGVGG), serve as a signal peptide directing secretion. Position 61 is a pyrrolidone carboxylic acid (Gln61). At Phe63 the chain carries D-phenylalanine; in form CHH-A-II. 3 cysteine pairs are disulfide-bonded: Cys67-Cys103, Cys83-Cys99, and Cys86-Cys112. Val132 carries the post-translational modification Valine amide.

Belongs to the arthropod CHH/MIH/GIH/VIH hormone family. In terms of processing, stereoinversion of L-Phe (form CHH-A-I) to D-Phe (form CHH-A-II). Produced by the medulla terminalis X-organ in the eyestalks and transported to the sinus gland where they are stored and released. Present also in the ventral nervous system.

It localises to the secreted. Its function is as follows. CHH is the most abundant hormone in the sinus gland of isopods and decapods which controls the blood sugar level. Has a secretagogue action over the amylase released from the midgut gland. May act as a stress hormone. MIH may inhibit Y-organs where molting hormone (ecdysteroid) is secreted and a molting cycle is initiated when MIH secretion diminishes or stops. This Homarus americanus (American lobster) protein is Crustacean hyperglycemic hormones isoform A.